Consider the following 695-residue polypeptide: Elongation factor G (695 aa).

Residues E8 to T282 enclose the tr-type G domain. GTP-binding positions include A17–T24, D81–H85, and N135–D138.

Belongs to the TRAFAC class translation factor GTPase superfamily. Classic translation factor GTPase family. EF-G/EF-2 subfamily.

The protein localises to the cytoplasm. Functionally, catalyzes the GTP-dependent ribosomal translocation step during translation elongation. During this step, the ribosome changes from the pre-translocational (PRE) to the post-translocational (POST) state as the newly formed A-site-bound peptidyl-tRNA and P-site-bound deacylated tRNA move to the P and E sites, respectively. Catalyzes the coordinated movement of the two tRNA molecules, the mRNA and conformational changes in the ribosome. The polypeptide is Elongation factor G (Listeria innocua serovar 6a (strain ATCC BAA-680 / CLIP 11262)).